The chain runs to 377 residues: Cell division cycle-associated protein 7 (377 aa).

Disordered regions lie at residues 58 to 113 (RTRS…EEDG) and 144 to 211 (IFSG…EEDK). A compositionally biased stretch (low complexity) spans 76–100 (PARNTRRAANTKAAPPKPSESSAND). Residues 148-173 (RHSLPGHRTKDSKSPRRRTFPGVASR) form an interaction with MYC region. The Nuclear localization signal motif lies at 163–179 (RRRTFPGVASRRNPERR). Threonine 166 is modified (phosphothreonine). Residue serine 193 is modified to Phosphoserine. A Phosphothreonine modification is found at threonine 199. Over residues 199–210 (TEEEEDEEEEED) the composition is skewed to acidic residues. Residue lysine 211 forms a Glycyl lysine isopeptide (Lys-Gly) (interchain with G-Cter in SUMO2) linkage. Serine 220 bears the Phosphoserine mark. A mediates transcriptional activity region spans residues 253-377 (EEEIRNICSN…SLKQEFEMQA (125 aa)).

Interacts with MYC (via C-terminus), YWHAE and YWHAZ. Phosphorylation at Thr-166 promotes interaction with YWHAE and YWHAZ, dissociation from MYC and sequestration in the cytoplasm.

The protein localises to the nucleus. The protein resides in the cytoplasm. Participates in MYC-mediated cell transformation and apoptosis; induces anchorage-independent growth and clonogenicity in lymphoblastoid cells. Insufficient to induce tumorigenicity when overexpressed but contributes to MYC-mediated tumorigenesis. May play a role as transcriptional regulator. This Rattus norvegicus (Rat) protein is Cell division cycle-associated protein 7 (Cdca7).